Here is a 492-residue protein sequence, read N- to C-terminus: Putative transporter SVOPL (492 aa).

A run of 10 helical transmembrane segments spans residues 48–68 (IALF…IMLI), 86–106 (VALV…LFGL), 121–141 (FLWG…IWFV), 179–199 (VFWL…IPTI), 203–223 (WLIR…KFIP), 281–301 (TLQI…VILA), 348–368 (IIST…INFL), 383–403 (LFFL…FLFM), 429–449 (ALGM…APFI), and 458–478 (ILGA…SAFT).

This sequence belongs to the major facilitator superfamily.

The protein resides in the membrane. The chain is Putative transporter SVOPL (SVOPL) from Homo sapiens (Human).